The sequence spans 483 residues: MPVPPPPPPPLPPPPPPLGAPPPPPPSAPPVSTDTSSLRRADPKGRSALLADIQQGTRLRKVTQINDRSAPQIESSKGTNKEGGGSANTRGASTPPTLGDLFAGGFPVLRPAGQRDVAGGKTGQGPGSRAPSPRLPNKTISGPLIPPASPRLGNTSEAHGAARTAPPRPNVPAPPPPTPPPPPPPLPPPLPSSSPIKTPLVSPPGPLTKGNLPVVAPPVPCAPPPPPPPPPPTPPPLPPASVLSDKAVKPQLAPLHLPPIPPPLPLLPPCGYPGLKAEPASPAQDAQEPPAPPPPLPPYASCSPRASLPAPPLPGVNSSSETPPPLPPKSPSFQAPPQKAGAQALPAPPAPPGSQPFLQKKRHGRPGAGGGKLNPPPAPPARSPTTELSSKSQQATAWTPTQQPGGQLRNGSLHIIDDFESKFTFHSVEDFPPPDEYKPCQKIYPSKIPRSRTPGPWLQAEAVGQSSDDIKGRNSQLSLKTLR.

Residues 1-29 (MPVPPPPPPPLPPPPPPLGAPPPPPPSAP) show a composition bias toward pro residues. The disordered stretch occupies residues 1 to 414 (MPVPPPPPPP…GGQLRNGSLH (414 aa)). 3 short sequence motifs (profilin-binding motif) span residues 3–8 (VPPPPP), 11–16 (LPPPPP), and 20–25 (APPPPP). Residues 45–62 (GRSALLADIQQGTRLRKV) enclose the WH2 domain. Arg46 carries the asymmetric dimethylarginine modification. Residues 58–61 (RLRK) carry the RLRK motif. 2 stretches are compositionally biased toward polar residues: residues 63–78 (TQIN…SSKG) and 87–96 (ANTRGASTPP). At Ser149 the chain carries Phosphoserine. The segment covering 166–192 (PPRPNVPAPPPPTPPPPPPPLPPPLPS) has biased composition (pro residues). Ser202 is subject to Phosphoserine. Pro residues-rich tracts occupy residues 215–239 (VAPP…PLPP) and 256–271 (HLPP…PPCG). Low complexity predominate over residues 277 to 288 (AEPASPAQDAQE). Residues 289 to 298 (PPAPPPPLPP) show a composition bias toward pro residues. Composition is skewed to low complexity over residues 299-308 (YASCSPRASL) and 331-345 (PSFQ…AQAL). Ser383 carries the post-translational modification Phosphoserine. Low complexity predominate over residues 393–404 (QQATAWTPTQQP). The short motif at 424–448 (TFHSVEDFPPPDEYKPCQKIYPSKI) is the WASP-binding motif element. Residues 461-483 (EAVGQSSDDIKGRNSQLSLKTLR) are disordered. Positions 473-483 (RNSQLSLKTLR) are enriched in polar residues.

It belongs to the verprolin family. As to quaternary structure, interacts with WASL, and monomeric and filamentous actin.

It is found in the cytoplasm. In terms of biological role, may be a regulator of cytoskeletal organization. May have a role in spermatogenesis. The sequence is that of WAS/WASL-interacting protein family member 3 (WIPF3) from Homo sapiens (Human).